A 66-amino-acid chain; its full sequence is MSDEKYNAKLDQAGGKLKEGFGKISGDKSLETEGKVDKVTGKVKEVIVDAKDTVKGLAKGLDNKDK.

The protein belongs to the UPF0337 (CsbD) family.

This chain is UPF0337 protein spyM18_1212, found in Streptococcus pyogenes serotype M18 (strain MGAS8232).